A 311-amino-acid polypeptide reads, in one-letter code: MRLTQAPPSRRTLMTLGAGATMAALLPAGGAAYASTSTAKAPAAEGISGRLRALEKQYAARLGVFALDTGTGAGRSYRAGERFPMCSVFKALAAAAVLRDVDARREFLTKRIHYTEKFVKDAGYIPVTGKPENIAGGMTGAELCAAAVSESDNGAGNLLLRELDGPTGITRFCRSLGDTTTRLDRWEPALNSAEPDRVTDTTSPGAIGRTFGRLIVGSALRAGDRKRLTGWLVANTTNRPTFRAGLPDDWVLADKTGGGEQYGVANDVGVVQPPGRAPLVLSVLSTKFDPKGPTDNPLVAKAAALVAGELT.

The tat-type signal signal peptide spans 1–34; sequence MRLTQAPPSRRTLMTLGAGATMAALLPAGGAAYA. Serine 87 serves as the catalytic Acyl-ester intermediate. 255–257 serves as a coordination point for substrate; the sequence is KTG.

Belongs to the class-A beta-lactamase family. In terms of processing, predicted to be exported by the Tat system. The position of the signal peptide cleavage has not been experimentally proven.

It catalyses the reaction a beta-lactam + H2O = a substituted beta-amino acid. The sequence is that of Beta-lactamase (bla) from Kitasatospora aureofaciens (Streptomyces aureofaciens).